A 697-amino-acid chain; its full sequence is Elongation factor G (697 aa).

Positions 8-287 (ERVRNIGIAA…AVVDYLPAPT (280 aa)) constitute a tr-type G domain. Residues 17–24 (AHIDAGKT), 81–85 (DTPGH), and 135–138 (NKMD) contribute to the GTP site.

This sequence belongs to the TRAFAC class translation factor GTPase superfamily. Classic translation factor GTPase family. EF-G/EF-2 subfamily.

Its subcellular location is the cytoplasm. Functionally, catalyzes the GTP-dependent ribosomal translocation step during translation elongation. During this step, the ribosome changes from the pre-translocational (PRE) to the post-translocational (POST) state as the newly formed A-site-bound peptidyl-tRNA and P-site-bound deacylated tRNA move to the P and E sites, respectively. Catalyzes the coordinated movement of the two tRNA molecules, the mRNA and conformational changes in the ribosome. This chain is Elongation factor G (fusA), found in Arthrospira platensis (Spirulina platensis).